Consider the following 231-residue polypeptide: MKKTLLASSLAVGLGIVAGNAGHEAQASEADLNKASLAQMAQSNDQTLNQKPIEAGAYNYTFDYEGFTYHFESDGTHFAWNYHATGANGADMSAQAPATNNVAPSADQSNQVQSQEVEAPQNAQTQQPQASTSNNSQVTATPTESKASEGSSVNVNDHLKQIAQRESGGNIHAVNPTSGAAGKYQFLQSTWDSVAPAKYKGVSPANAPESVQDAAAVKLYNTGGAGHWVTA.

Positions 1-27 (MKKTLLASSLAVGLGIVAGNAGHEAQA) are cleaved as a signal peptide. Residues 92 to 153 (MSAQAPATNN…ESKASEGSSV (62 aa)) form a disordered region. Residues 96-116 (APATNNVAPSADQSNQVQSQE) show a composition bias toward polar residues. The segment covering 119–137 (APQNAQTQQPQASTSNNSQ) has biased composition (low complexity). The segment covering 138–153 (VTATPTESKASEGSSV) has biased composition (polar residues).

It belongs to the transglycosylase family. SceD subfamily.

The protein localises to the secreted. Is able to cleave peptidoglycan and affects clumping and separation of bacterial cells. In Staphylococcus aureus (strain MRSA252), this protein is Probable transglycosylase SceD (sceD).